A 342-amino-acid polypeptide reads, in one-letter code: Ribosomal RNA small subunit methyltransferase C (342 aa).

It belongs to the methyltransferase superfamily. RsmC family. Monomer.

Its subcellular location is the cytoplasm. It catalyses the reaction guanosine(1207) in 16S rRNA + S-adenosyl-L-methionine = N(2)-methylguanosine(1207) in 16S rRNA + S-adenosyl-L-homocysteine + H(+). Functionally, specifically methylates the guanine in position 1207 of 16S rRNA in the 30S particle. This is Ribosomal RNA small subunit methyltransferase C from Salmonella paratyphi A (strain ATCC 9150 / SARB42).